Reading from the N-terminus, the 467-residue chain is Glycogen synthase (467 aa).

Lysine 15 serves as a coordination point for ADP-alpha-D-glucose.

Belongs to the glycosyltransferase 1 family. Bacterial/plant glycogen synthase subfamily.

It catalyses the reaction [(1-&gt;4)-alpha-D-glucosyl](n) + ADP-alpha-D-glucose = [(1-&gt;4)-alpha-D-glucosyl](n+1) + ADP + H(+). It functions in the pathway glycan biosynthesis; glycogen biosynthesis. Functionally, synthesizes alpha-1,4-glucan chains using ADP-glucose. The protein is Glycogen synthase of Desulfitobacterium hafniense (strain DSM 10664 / DCB-2).